We begin with the raw amino-acid sequence, 163 residues long: Regulatory protein RecX (163 aa).

The tract at residues 1–21 is disordered; it reads MSDAEDIPTGRKRRPREQTPV.

The protein belongs to the RecX family.

The protein resides in the cytoplasm. Modulates RecA activity. This chain is Regulatory protein RecX, found in Stenotrophomonas maltophilia (strain K279a).